The sequence spans 487 residues: N-succinylglutamate 5-semialdehyde dehydrogenase (487 aa).

G221 to G226 is an NAD(+) binding site. Active-site residues include E244 and C278.

The protein belongs to the aldehyde dehydrogenase family. AstD subfamily.

The catalysed reaction is N-succinyl-L-glutamate 5-semialdehyde + NAD(+) + H2O = N-succinyl-L-glutamate + NADH + 2 H(+). It participates in amino-acid degradation; L-arginine degradation via AST pathway; L-glutamate and succinate from L-arginine: step 4/5. Its function is as follows. Catalyzes the NAD-dependent reduction of succinylglutamate semialdehyde into succinylglutamate. In Burkholderia orbicola (strain MC0-3), this protein is N-succinylglutamate 5-semialdehyde dehydrogenase.